The chain runs to 99 residues: Large ribosomal subunit protein bL27 (99 aa).

Positions 13–65 are disordered; sequence AHHKGGGSTTNGRNSAGRRLGAKRADGQEVHAGSIIYRQRGTKIHPGKNVGRG.

This sequence belongs to the bacterial ribosomal protein bL27 family.

The sequence is that of Large ribosomal subunit protein bL27 from Lactobacillus delbrueckii subsp. bulgaricus (strain ATCC BAA-365 / Lb-18).